The following is an 88-amino-acid chain: Small ribosomal subunit protein uS15 (88 aa).

The protein belongs to the universal ribosomal protein uS15 family. As to quaternary structure, part of the 30S ribosomal subunit. Forms a bridge to the 50S subunit in the 70S ribosome, contacting the 23S rRNA.

Its function is as follows. One of the primary rRNA binding proteins, it binds directly to 16S rRNA where it helps nucleate assembly of the platform of the 30S subunit by binding and bridging several RNA helices of the 16S rRNA. In terms of biological role, forms an intersubunit bridge (bridge B4) with the 23S rRNA of the 50S subunit in the ribosome. This is Small ribosomal subunit protein uS15 from Borrelia garinii subsp. bavariensis (strain ATCC BAA-2496 / DSM 23469 / PBi) (Borreliella bavariensis).